An 89-amino-acid chain; its full sequence is Cell division topological specificity factor (89 aa).

This sequence belongs to the MinE family.

Prevents the cell division inhibition by proteins MinC and MinD at internal division sites while permitting inhibition at polar sites. This ensures cell division at the proper site by restricting the formation of a division septum at the midpoint of the long axis of the cell. This is Cell division topological specificity factor from Legionella pneumophila (strain Paris).